The primary structure comprises 368 residues: UV excision repair protein rhp23 (368 aa).

In terms of domain architecture, Ubiquitin-like spans 1–77 (MNLTFKNLQQ…IVCMVSRPKT (77 aa)). 2 stretches are compositionally biased toward low complexity: residues 76-88 (KTSTSTPKSAASP) and 103-124 (APSSTVAESTSTTQTVAAAAPS). The disordered stretch occupies residues 76 to 134 (KTSTSTPKSAASPAPNPPASVPEKKVEAPSSTVAESTSTTQTVAAAAPSNPDTTATSEA). Residues Ser84 and Ser87 each carry the phosphoserine modification. 2 UBA domains span residues 135-185 (PIDA…LLTG) and 320-360 (QEES…LFEH). Ser364 bears the Phosphoserine mark.

The protein resides in the nucleus. Its function is as follows. Involved in postreplication repair of UV-damaged DNA. Postreplication repair functions in gap-filling of a daughter strand on replication of damaged DNA. In terms of biological role, protects ubiquitin chains against dissambly by deubiquitinating enzymes thereby promoting protein degradation. In Schizosaccharomyces pombe (strain 972 / ATCC 24843) (Fission yeast), this protein is UV excision repair protein rhp23 (rhp23).